We begin with the raw amino-acid sequence, 53 residues long: ATP synthase protein 8 (53 aa).

The chain crosses the membrane as a helical span at residues 5 to 25; sequence APISWLTLFFVFSITLVIFNI.

It belongs to the ATPase protein 8 family. In terms of assembly, F-type ATPases have 2 components, CF(1) - the catalytic core - and CF(0) - the membrane proton channel.

It is found in the mitochondrion membrane. Its function is as follows. Mitochondrial membrane ATP synthase (F(1)F(O) ATP synthase or Complex V) produces ATP from ADP in the presence of a proton gradient across the membrane which is generated by electron transport complexes of the respiratory chain. F-type ATPases consist of two structural domains, F(1) - containing the extramembraneous catalytic core and F(0) - containing the membrane proton channel, linked together by a central stalk and a peripheral stalk. During catalysis, ATP synthesis in the catalytic domain of F(1) is coupled via a rotary mechanism of the central stalk subunits to proton translocation. Part of the complex F(0) domain. Minor subunit located with subunit a in the membrane. This Aedes aegypti (Yellowfever mosquito) protein is ATP synthase protein 8.